Here is a 197-residue protein sequence, read N- to C-terminus: ADP-ribosylation factor-like protein 16 (197 aa).

GTP contacts are provided by residues 30–37, 82–86, and 139–142; these read GATGVGKT, ELGGC, and NKID.

This sequence belongs to the small GTPase superfamily. Arf family. Interacts with RIGI; this interaction is GTP-dependent and induced upon viral infection; this interaction suppresses the RNA sensing activity of RIGI.

It is found in the cytoplasm. Its function is as follows. May suppress the RNA sensing activity of RIGI in a GTP-dependent. The chain is ADP-ribosylation factor-like protein 16 from Homo sapiens (Human).